We begin with the raw amino-acid sequence, 495 residues long: Muscle LIM protein Mlp84B (495 aa).

The region spanning 12–63 (CPRCGKSVYAAEERLAGGYVFHKNCFKCGMCNKSLDSTNCTEHERELYCKTC) is the LIM zinc-binding 1 domain. Residues 66–71 (RKFGPK) carry the Nuclear localization signal motif. Positions 120 to 172 (CPRCGGYVYAAEQMLARGRSWHKECFKCGTCKKGLDSILCCEAPDKNIYCKGC) constitute an LIM zinc-binding 2 domain. A Nuclear localization signal motif is present at residues 175–180 (KKFGPK). LIM zinc-binding domains are found at residues 222–274 (CPRC…CRTC), 325–377 (CPRC…CRAC), and 421–473 (CPRC…CRAC).

In terms of tissue distribution, in the embryo, expression is restricted to the somatic, visceral, and pharyngeal muscles. Within the somatic musculature, expression is localized at the ends of muscles fibers at the point of attachment to the epidermis (at protein level). There is no expression in cardiac mesoderm or in fat body.

The protein localises to the cytoplasm. It is found in the nucleus. Functionally, plays a role in cell differentiation late in myogenesis. Transcription factor Mef2 is essential for expression. The protein is Muscle LIM protein Mlp84B of Drosophila melanogaster (Fruit fly).